A 1445-amino-acid polypeptide reads, in one-letter code: MENSLGCVWVPKLAFVLFGASLLSAHLQVTGFQIKPFTSLHFVSEPSDAVTMRGGNVLLNCSAESDRGVPVIKWKKDGLILALGMDDRKQQLPNGSLLIQNILHSRHHKPDEGLYQCEASLGDSGSIISRTAKVMVAGPLRFLSQTESITAFMGDTVLLKCEVIGDPMPTIHWQKNQQDLNPIPGDSRVVVLPSGALQISRLQPGDSGVYRCSARNPASTRTGNEAEVRILSDPGLHRQLYFLQRPSNVIAIEGKDAVLECCVSGYPPPSFTWLRGEEVIQLRSKKYSLLGGSNLLISNVTDDDSGTYTCVVTYKNENISASAELTVLVPPWFLNHPSNLYAYESMDIEFECAVSGKPVPTVNWMKNGDVVIPSDYFQIVGGSNLRILGVVKSDEGFYQCVAENEAGNAQSSAQLIVPKPAIPSSSILPSAPRDVVPVLVSSRFVRLSWRPPAEAKGNIQTFTVFFSREGDNRERALNTTQPGSLQLTVGNLKPEAMYTFRVVAYNEWGPGESSQPIKVATQPELQVPGPVENLHAVSASPTSILITWEPPAYANGPVQGYRLFCTEVSTGKEQNIEVDGLSYKLEGLKKFTEYTLRFLAYNRYGPGVSTDDITVVTLSDVPSAPPQNVSLEVVNSRSIKVSWLPPPSGTQNGFITGYKIRHRKTTRRGEMETLEPNNLWYLFTGLEKGSQYSFQVSAMTVNGTGPPSNWYTAETPENDLDESQVPDQPSSLHVRPQTNCIIMSWTPPLNPNIVVRGYIIGYGVGSPYAETVRVDSKQRYYSIERLESSSHYVISLKAFNNAGEGVPLYESATTRSITDPTDPVDYYPLLDDFPTSGPDVSTPMLPPVGVQAVALTHEAVRVSWADNSVPKNQKTSDVRLYTVRWRTSFSASAKYKSEDTTSLSYTATGLKPNTMYEFSVMVTKNRRSSTWSMTAHATTYEAAPTSAPKDLTVITREGKPRAVIVSWQPPLEANGKITAYILFYTLDKNIPIDDWIMETISGDRLTHQIMDLSLDTMYYFRIQARNAKGVGPLSDPILFRTLKVEHPDKMANDQGRHGDGGYWPVDTNLIDRSTLNEPPIGQMHPPHGSVTPQKNSNLLVITVVTVGVLTVLVVVIVAVICTRRSSAQQRKKRATHSASKRKGSQKDLRPPDLWIHHEEMEMKNIEKPAGTDPAGRGSPIQSCQDLTPVSHSQSESQMGSKSASHSGQDTEEAGSSMSTLERSLAARRATRTKLMIPMEAQSNNPAVVSAIPVPTLESAQYPGILPSPTCGYPHPQFTLRPVPFPTLSVDRGFGAGRTVSEGPTAQQQPMLPPAQPEHPSSEEAPSRTIPTACVRPTHPLRSFANPLLPPPMSAIEPKVPYTPLLSQPGPTLPKTHVKTASLGLAGKARSPLLPVSVPTAPEVSEESHKPTEDPASVYEQDDLSEQMASLEGLMKQLNAITGSAF.

An N-terminal signal peptide occupies residues 1–25 (MENSLGCVWVPKLAFVLFGASLLSA). 4 consecutive Ig-like C2-type domains span residues 26–135 (HLQV…AKVM), 139–229 (PLRF…AEVR), 234–326 (PGLH…AELT), and 331–416 (PWFL…AQLI). N-linked (GlcNAc...) asparagine glycosylation is found at Asn-60 and Asn-94. Intrachain disulfides connect Cys-61–Cys-117, Cys-161–Cys-212, and Cys-261–Cys-310. N-linked (GlcNAc...) asparagine glycans are attached at residues Asn-299 and Asn-318. Residues Cys-352 and Cys-400 are joined by a disulfide bond. 6 consecutive Fibronectin type-III domains span residues 431-524 (APRD…TQPE), 530-620 (PVEN…TLSD), 625-718 (PPQN…TPEN), 728-821 (QPSS…TDPT), 846-942 (PPVG…TYEA), and 947-1044 (APKD…TLKV). N-linked (GlcNAc...) asparagine glycosylation is present at Asn-478. N-linked (GlcNAc...) asparagine glycosylation is found at Asn-628 and Asn-702. Residues 1100-1120 (VITVVTVGVLTVLVVVIVAVI) traverse the membrane as a helical segment. Disordered stretches follow at residues 1126–1152 (SAQQRKKRATHSASKRKGSQKDLRPPD) and 1167–1220 (KPAG…MSTL). A compositionally biased stretch (basic residues) spans 1129–1143 (QRKKRATHSASKRKG). Residue Ser-1178 is modified to Phosphoserine; by MAPK1. Residues 1179-1220 (PIQSCQDLTPVSHSQSESQMGSKSASHSGQDTEEAGSSMSTL) are compositionally biased toward polar residues. Thr-1187 bears the Phosphothreonine; by MAPK1 mark. At Ser-1267 the chain carries Phosphoserine; by MAPK1. Disordered stretches follow at residues 1292–1327 (GFGAGRTVSEGPTAQQQPMLPPAQPEHPSSEEAPSR) and 1392–1417 (LLPVSVPTAPEVSEESHKPTEDPASV).

It belongs to the immunoglobulin superfamily. DCC family. Interacts with the cytoplasmic part of UNC5A, UNC5B and UNC5C. Interacts with DSCAM. Interacts with PTK2/FAK1. Interacts with MYO10. Interacts with MAPK1. Interacts with NTN1. Interacts with CBLN4; this interaction can be competed by NTN1. Interacts with SIAH1 and SIAH2. Post-translationally, ubiquitinated; mediated by SIAH1 or SIAH2 and leading to its subsequent proteasomal degradation. As to expression, detected in embryonic spinal cord, predominantly in axons of commissural neurons (at protein level). Detected in embryonic spinal cord.

It localises to the membrane. In terms of biological role, receptor for netrin required for axon guidance. Mediates axon attraction of neuronal growth cones in the developing nervous system upon ligand binding. Its association with UNC5 proteins may trigger signaling for axon repulsion. It also acts as a dependence receptor required for apoptosis induction when not associated with netrin ligand. Implicated as a tumor suppressor gene. The sequence is that of Netrin receptor DCC (Dcc) from Rattus norvegicus (Rat).